We begin with the raw amino-acid sequence, 304 residues long: Hairy/enhancer-of-split related with YRPW motif protein 1 (304 aa).

The interval 1–52 (MKRAHPDYSSSDSELDETVEVEKESADENGNLSSALGSMSPTTSSQILARKR) is disordered. Over residues 28-47 (ENGNLSSALGSMSPTTSSQI) the composition is skewed to polar residues. Residues 48–117 (LARKRRRGII…GGKGYFDAHA (70 aa)) are transcriptional repression and interaction with NCOR1 and SIN3A. Positions 49–104 (ARKRRRGIIEKRRRDRINNSLSELRRLVPSAFEKQGSAKLEKAEILQMTVDHLKML) constitute a bHLH domain. One can recognise an Orange domain in the interval 122-158 (YRSLGFRECLAEVARYLSIIEGLDASDPLRVRLVSHL). The interval 191-234 (AHPLLLPQSGHGNTGTSASPTDPHHQGRLAAAHPEAPALRAPPS) is disordered. Polar residues predominate over residues 200 to 210 (GHGNTGTSASP). Low complexity predominate over residues 218–234 (RLAAAHPEAPALRAPPS).

It belongs to the HEY family. Self-associates. Interacts with HES1 and HEYL. Interacts with HDAC1, NCOR1 and SIN3A. Interacts with GATA4 and GATA6. Interacts with CCDC89/BOIP.

Its subcellular location is the nucleus. Its function is as follows. Transcriptional repressor which binds preferentially to the canonical E box sequence 5'-CACGTG-3'. Downstream effector of Notch signaling required for cardiovascular development. Specifically required for the Notch-induced endocardial epithelial to mesenchymal transition, which is itself criticial for cardiac valve and septum development. May be required in conjunction with HEY2 to specify arterial cell fate or identity. Promotes maintenance of neuronal precursor cells and glial versus neuronal fate specification. Represses transcription by the cardiac transcriptional activators GATA4 and GATA6 and by the neuronal bHLH factors ASCL1/MASH1 and NEUROD4/MATH3. In Canis lupus familiaris (Dog), this protein is Hairy/enhancer-of-split related with YRPW motif protein 1 (HEY1).